The primary structure comprises 210 residues: ATP-dependent Clp protease proteolytic subunit (210 aa).

Serine 113 acts as the Nucleophile in catalysis. Residue histidine 138 is part of the active site.

This sequence belongs to the peptidase S14 family. In terms of assembly, fourteen ClpP subunits assemble into 2 heptameric rings which stack back to back to give a disk-like structure with a central cavity, resembling the structure of eukaryotic proteasomes.

The protein localises to the cytoplasm. The enzyme catalyses Hydrolysis of proteins to small peptides in the presence of ATP and magnesium. alpha-casein is the usual test substrate. In the absence of ATP, only oligopeptides shorter than five residues are hydrolyzed (such as succinyl-Leu-Tyr-|-NHMec, and Leu-Tyr-Leu-|-Tyr-Trp, in which cleavage of the -Tyr-|-Leu- and -Tyr-|-Trp bonds also occurs).. Its function is as follows. Cleaves peptides in various proteins in a process that requires ATP hydrolysis. Has a chymotrypsin-like activity. Plays a major role in the degradation of misfolded proteins. In Marinomonas sp. (strain MWYL1), this protein is ATP-dependent Clp protease proteolytic subunit.